The primary structure comprises 233 residues: Probable 2-phosphosulfolactate phosphatase (233 aa).

The protein belongs to the ComB family. It depends on Mg(2+) as a cofactor.

It carries out the reaction (2R)-O-phospho-3-sulfolactate + H2O = (2R)-3-sulfolactate + phosphate. This Symbiobacterium thermophilum (strain DSM 24528 / JCM 14929 / IAM 14863 / T) protein is Probable 2-phosphosulfolactate phosphatase.